A 68-amino-acid chain; its full sequence is DLITNSYTRGKPRHVTSWPKLRALGNCVPVPGQCIGNGCFCDREAPHGNCCDTDGCTSLFWCPGSKAG.

A propeptide spanning residues 1–21 is cleaved from the precursor; the sequence is DLITNSYTRGKPRHVTSWPKL.

Contains 4 disulfide bonds. Expressed by the venom duct.

It is found in the secreted. This chain is Conotoxin Cal12.1p3, found in Californiconus californicus (California cone).